The chain runs to 20 residues: Maximin-Hu (20 aa).

It belongs to the bombinin family. Expressed by the skin glands.

The protein resides in the secreted. Functionally, has antimicrobial activity. This Bombina maxima (Giant fire-bellied toad) protein is Maximin-Hu.